We begin with the raw amino-acid sequence, 445 residues long: Proline--tRNA ligase (445 aa).

Belongs to the class-II aminoacyl-tRNA synthetase family. ProS type 2 subfamily. In terms of assembly, homodimer.

The protein resides in the cytoplasm. The enzyme catalyses tRNA(Pro) + L-proline + ATP = L-prolyl-tRNA(Pro) + AMP + diphosphate. In terms of biological role, catalyzes the attachment of proline to tRNA(Pro) in a two-step reaction: proline is first activated by ATP to form Pro-AMP and then transferred to the acceptor end of tRNA(Pro). This chain is Proline--tRNA ligase, found in Dinoroseobacter shibae (strain DSM 16493 / NCIMB 14021 / DFL 12).